We begin with the raw amino-acid sequence, 51 residues long: MKKERTKVFGRGANECRRCGRRRGLIRMYGLYLCRQCFREVASELGFKKYW.

4 residues coordinate Zn(2+): C16, C19, C34, and C37.

It belongs to the universal ribosomal protein uS14 family. Zinc-binding uS14 subfamily. Part of the 30S ribosomal subunit. Requires Zn(2+) as cofactor.

Binds 16S rRNA, required for the assembly of 30S particles. The chain is Small ribosomal subunit protein uS14 from Archaeoglobus fulgidus (strain ATCC 49558 / DSM 4304 / JCM 9628 / NBRC 100126 / VC-16).